A 1041-amino-acid chain; its full sequence is MENAHTKTVEEVLAYFGVNESTGLSLEQVKKLKEKWGSNELPAEEGKTLLELVIEQFEDLLVRILLLAACISFVLAWFEEGEETITAFVEPFVILLILVANAIVGVWQERNAENAIEALKEYEPEMGKVYRQDRKSVQRIKARDIVPGDIVEVAVGDKVPADIRITSIKSTTLRVDQSILTGESVSVIKHTDPVPDPRAVNQDKKNMLFSGTNIAAGKAMGVVIATGVNTEIGKIRDEMVATEQERTPLQQKLDEFGEQLSKVISLICIAVWIINIGHFNDPVHGGSWIRGAIYYFKIAVALAVAAIPEGLPAVITTCLALGTRRMAKKNAIVRSLPSVETLGCTSVICSDKTGTLTTNQMSVCRMFILDKVEGDSCSLNEFTVTGSTYAPMGEVHKDDKLIKCSQYDGLVELATICALCNDSSLDYNEAKGVYEKVGEATETALTCLVEKMNVFDTDLKGLSRIERANACNSVIKQLMKKEFTLEFSRDRKSMSVYCTPNKPSRTSMSKMFVKGAPEGVIDRCTHVRVGNAKIPLSSGIKQKIMSVIREWGTGRDTLRCLALATHDNPPRKEEMNLEDSSNFINYETNLTFVGCVGMLDPPRIEVASSIKLCKQAGIRVIMITGDNKGTAVAICRRIGIFVEDEDVSTKAFTGREFDELSLAAQRDACHHARCFARVEPSHKSKIVEFLQSFDEITAMTGDGVNDAPALKKAEIGIAMGSGTAVAKTASEMVLADDNFSTIVAAVEEGRAIYNNMKQFIRYLISSNVGEVVCIFLTAALGFPEALIPVQLLWVNLVTDGLPATALGFNPPDLDIMNKPPRNPKEPLISGWLFFRYLAIGCYVGAATVGAAAWWFIAADGGPRVTFYQLSHFLQCKEDNPDFSGVDCVVFESPYPMTMALSVLVTIEMCNALNSLSENQSLMRMPPWENIWLVGAICLSMSLHFLILYVEPLPIIFQITPLNVTQWLMVLKISLPVILLDETLKYVARNYLEPGKDSVQPATKPCSLSACTEGVSWPFVFITLPLVIWLYSTDTNFSDMFW.

At 1 to 48 the chain is on the cytoplasmic side; sequence MENAHTKTVEEVLAYFGVNESTGLSLEQVKKLKEKWGSNELPAEEGKT. The helical transmembrane segment at 49 to 69 threads the bilayer; that stretch reads LLELVIEQFEDLLVRILLLAA. Residues 70-89 are Lumenal-facing; it reads CISFVLAWFEEGEETITAFV. Residues 90-110 traverse the membrane as a helical segment; sequence EPFVILLILVANAIVGVWQER. Topologically, residues 111–253 are cytoplasmic; the sequence is NAENAIEALK…QERTPLQQKL (143 aa). Residues 254-273 traverse the membrane as a helical segment; that stretch reads DEFGEQLSKVISLICIAVWI. The Lumenal portion of the chain corresponds to 274–295; sequence INIGHFNDPVHGGSWIRGAIYY. The chain crosses the membrane as a helical span at residues 296-313; it reads FKIAVALAVAAIPEGLPA. Ca(2+)-binding residues include V304, A305, I307, and E309. Over 314–756 the chain is Cytoplasmic; it reads VITTCLALGT…EEGRAIYNNM (443 aa). The 4-aspartylphosphate intermediate role is filled by D351. D351 and T353 together coordinate Mg(2+). T353, E442, R489, K514, R559, T624, G625, D626, R677, and K683 together coordinate ATP. D702 is a binding site for Mg(2+). N705 contributes to the ATP binding site. A helical membrane pass occupies residues 757-776; that stretch reads KQFIRYLISSNVGEVVCIFL. Residues N767 and E770 each coordinate Ca(2+). The Lumenal segment spans residues 777–786; that stretch reads TAALGFPEAL. A helical membrane pass occupies residues 787–807; that stretch reads IPVQLLWVNLVTDGLPATALG. The segment at 787–807 is interaction with PLN; the sequence is IPVQLLWVNLVTDGLPATALG. Positions 795, 798, and 799 each coordinate Ca(2+). The Cytoplasmic portion of the chain corresponds to 808-827; it reads FNPPDLDIMNKPPRNPKEPL. The helical transmembrane segment at 828-850 threads the bilayer; sequence ISGWLFFRYLAIGCYVGAATVGA. Over 851 to 896 the chain is Lumenal; that stretch reads AAWWFIAADGGPRVTFYQLSHFLQCKEDNPDFSGVDCVVFESPYPM. A disulfide bond links C875 and C887. A helical transmembrane segment spans residues 897–916; the sequence is TMALSVLVTIEMCNALNSLS. E907 contributes to the Ca(2+) binding site. Residues 917–929 lie on the Cytoplasmic side of the membrane; the sequence is ENQSLMRMPPWEN. Residues 930 to 948 traverse the membrane as a helical segment; sequence IWLVGAICLSMSLHFLILY. The tract at residues 931–942 is interaction with PLN; that stretch reads WLVGAICLSMSL. The Lumenal portion of the chain corresponds to 949–963; sequence VEPLPIIFQITPLNV. The chain crosses the membrane as a helical span at residues 964–984; that stretch reads TQWLMVLKISLPVILLDETLK. Residues 985 to 1041 lie on the Cytoplasmic side of the membrane; the sequence is YVARNYLEPGKDSVQPATKPCSLSACTEGVSWPFVFITLPLVIWLYSTDTNFSDMFW.

Belongs to the cation transport ATPase (P-type) (TC 3.A.3) family. Type IIA subfamily. Interacts with sarcolipin (SLN). Interacts with phospholamban (PLN). Interacts with myoregulin (MRLN). Interacts with DWORF. Interacts with TMX2. The cofactor is Mg(2+). As to expression, only isoform 2 is detected in heart, while both isoforms are expressed in brain, with isoform 2 being predominant.

It localises to the endoplasmic reticulum membrane. It is found in the sarcoplasmic reticulum membrane. The enzyme catalyses Ca(2+)(in) + ATP + H2O = Ca(2+)(out) + ADP + phosphate + H(+). Its activity is regulated as follows. Reversibly inhibited by phospholamban (PLN) at low calcium concentrations. Inhibited by sarcolipin (SLN) and myoregulin (MRLN). Enhanced by DWORF; DWORF increases activity by displacing sarcolipin (SLN), phospholamban (PLN) and myoregulin (MRLN). Functionally, this magnesium-dependent enzyme catalyzes the hydrolysis of ATP coupled with the translocation of calcium from the cytosol to the sarcoplasmic reticulum lumen. Isoform SERCA2A is involved in the regulation of the contraction/relaxation cycle. May act as a regulator of TNFSF11-mediated Ca(2+) signaling during osteoclastogenesis. The sequence is that of Sarcoplasmic/endoplasmic reticulum calcium ATPase 2 (ATP2A2) from Gallus gallus (Chicken).